Reading from the N-terminus, the 196-residue chain is GTP cyclohydrolase-2 (196 aa).

49 to 53 (RVHSE) is a GTP binding site. Residues C54, C65, and C67 each coordinate Zn(2+). GTP contacts are provided by residues Q70, 92–94 (EGR), and T114. D126 (proton acceptor) is an active-site residue. R128 (nucleophile) is an active-site residue. Positions 149 and 154 each coordinate GTP.

Belongs to the GTP cyclohydrolase II family. As to quaternary structure, homodimer. It depends on Zn(2+) as a cofactor.

It carries out the reaction GTP + 4 H2O = 2,5-diamino-6-hydroxy-4-(5-phosphoribosylamino)-pyrimidine + formate + 2 phosphate + 3 H(+). It participates in cofactor biosynthesis; riboflavin biosynthesis; 5-amino-6-(D-ribitylamino)uracil from GTP: step 1/4. Functionally, catalyzes the conversion of GTP to 2,5-diamino-6-ribosylamino-4(3H)-pyrimidinone 5'-phosphate (DARP), formate and pyrophosphate. This is GTP cyclohydrolase-2 from Shigella boydii serotype 18 (strain CDC 3083-94 / BS512).